A 101-amino-acid chain; its full sequence is Vacuolar ATPase assembly integral membrane protein VMA21 (101 aa).

Over Met-1 to Ser-25 the chain is Cytoplasmic. The chain crosses the membrane as a helical span at residues Thr-26–Phe-46. Residues Thr-47 to Tyr-65 lie on the Lumenal side of the membrane. Residues Phe-66–Val-86 form a helical membrane-spanning segment. The Cytoplasmic segment spans residues Ala-87–Asp-101.

Belongs to the VMA21 family. Associates with the V0 complex of the vacuolar ATPase (V-ATPase). Interacts with ATP6AP2.

It localises to the endoplasmic reticulum membrane. It is found in the endoplasmic reticulum-Golgi intermediate compartment membrane. The protein localises to the cytoplasmic vesicle. Its subcellular location is the COPII-coated vesicle membrane. Functionally, required for the assembly of the V0 complex of the vacuolar ATPase (V-ATPase) in the endoplasmic reticulum. This Homo sapiens (Human) protein is Vacuolar ATPase assembly integral membrane protein VMA21.